The sequence spans 481 residues: Endoplasmic reticulum lectin 1 (481 aa).

The signal sequence occupies residues 1–27; that stretch reads MRRSDRLRCAGASLLVVLCGVFRSSFG. MRH domains are found at residues 108 to 245 and 340 to 467; these read SSCS…LCNH and SYCF…ICKI. 6 cysteine pairs are disulfide-bonded: Cys110-Cys123, Cys198-Cys231, Cys214-Cys243, Cys342-Cys355, Cys419-Cys453, and Cys434-Cys465.

The protein localises to the endoplasmic reticulum lumen. Functionally, probable lectin that binds selectively to improperly folded lumenal proteins. May function in endoplasmic reticulum quality control and endoplasmic reticulum-associated degradation (ERAD) of both non-glycosylated proteins and glycoproteins. The chain is Endoplasmic reticulum lectin 1 (erlec1) from Xenopus tropicalis (Western clawed frog).